The chain runs to 211 residues: Thymidine kinase (211 aa).

ATP is bound by residues 9 to 16 (STMNAGKS) and 87 to 90 (DEAQ). The active-site Proton acceptor is the Glu-88. The Zn(2+) site is built by Cys-145, Cys-147, Cys-182, and His-185.

This sequence belongs to the thymidine kinase family. As to quaternary structure, homotetramer.

It is found in the cytoplasm. It carries out the reaction thymidine + ATP = dTMP + ADP + H(+). The chain is Thymidine kinase from Rhodopirellula baltica (strain DSM 10527 / NCIMB 13988 / SH1).